The sequence spans 69 residues: U-Asilidin(12)-Dg3a (69 aa).

A signal peptide spans M1 to A19. The propeptide occupies S20 to R33. 3 disulfide bridges follow: C36/C59, C45/C65, and C49/C67.

Belongs to the asilidin-12 family. In terms of tissue distribution, expressed by the venom gland.

The protein resides in the secreted. Moderately increases Kv11.1/KCNH2/ERG1 currents and shifts the voltage-dependence of the channel activation to hyperpolarised potentials. In vivo, induces neurotoxic effects when injected into insects (tested on L.cuprina and A.domesticus). The polypeptide is U-Asilidin(12)-Dg3a (Dolopus genitalis (Giant Australian assassin fly)).